The chain runs to 315 residues: MSQPTPAVRTFQDLILALQNYWAAQGCVVLQPYDMEVGAGTFHTATFLRAVGPETWNAAYVQPSRRPADGRYGENPNRLQHYYQFQVVLKPNPANFQELYLGSLKAIGLDPLVHDIRFVEDNWESPTLGAWGLGWEIWLNGMEVTQFTYFQQVGGIECYPVTGEITYGLERLAMYIQGVDSVYDLVWADGPFGKVTYGDVFHQNEVEQSTYNFEHANVEKLFELFDFYESEANRLIKLDLPLPTYEMVLKASHTFNLLDARRAISVTERQRYILRVRTLARDVAQSYLQARARLGFPMATPELRDEVLAKLEAAQ.

The protein belongs to the class-II aminoacyl-tRNA synthetase family. As to quaternary structure, tetramer of two alpha and two beta subunits.

Its subcellular location is the cytoplasm. The enzyme catalyses tRNA(Gly) + glycine + ATP = glycyl-tRNA(Gly) + AMP + diphosphate. The protein is Glycine--tRNA ligase alpha subunit of Pseudomonas putida (strain W619).